Here is a 733-residue protein sequence, read N- to C-terminus: Methionine--tRNA ligase (733 aa).

Positions 11 to 21 (PYANGPIHAGH) match the 'HIGH' region motif. 4 residues coordinate Zn(2+): cysteine 143, cysteine 146, cysteine 156, and cysteine 159. The short motif at 345-349 (KFSTS) is the 'KMSKS' region element. Threonine 348 contributes to the ATP binding site. A tRNA-binding domain is found at 633–733 (DFMKLDLRVG…KEVKLGARIR (101 aa)).

It belongs to the class-I aminoacyl-tRNA synthetase family. MetG type 1 subfamily. In terms of assembly, homodimer. Requires Zn(2+) as cofactor.

The protein localises to the cytoplasm. The enzyme catalyses tRNA(Met) + L-methionine + ATP = L-methionyl-tRNA(Met) + AMP + diphosphate. In terms of biological role, is required not only for elongation of protein synthesis but also for the initiation of all mRNA translation through initiator tRNA(fMet) aminoacylation. The sequence is that of Methionine--tRNA ligase from Thermococcus onnurineus (strain NA1).